A 446-amino-acid polypeptide reads, in one-letter code: Glutamine synthetase (446 aa).

The GS beta-grasp domain maps to 18-103 (ENVRYLRLQF…LICDVFKTDG (86 aa)). In terms of domain architecture, GS catalytic spans 110-446 (PRANLKRVLR…WEREQYIKQY (337 aa)). Mg(2+)-binding residues include Glu-134 and Glu-136. Position 186 (Glu-186) interacts with ATP. Mg(2+) is bound by residues Glu-191 and Glu-198. L-glutamate contacts are provided by residues 242-243 (NG) and Gly-243. Mg(2+) is bound at residue His-247. Ser-251 is a binding site for ATP. L-glutamate-binding residues include Arg-300, Glu-306, and Arg-318. Residues Arg-318 and Arg-323 each contribute to the ATP site. Mg(2+) is bound at residue Glu-335. Arg-337 lines the L-glutamate pocket.

It belongs to the glutamine synthetase family. In terms of assembly, oligomer of 12 subunits arranged in the form of two hexagons. In its feedback-inhibited form, interacts with TnrA in order to block its DNA-binding activity. The cofactor is Mg(2+).

It localises to the cytoplasm. It carries out the reaction L-glutamate + NH4(+) + ATP = L-glutamine + ADP + phosphate + H(+). Its activity is regulated as follows. Inhibited by glutamine. Functionally, glutamine synthetase (GS) is an unusual multitasking protein that functions as an enzyme, a transcription coregulator, and a chaperone in ammonium assimilation and in the regulation of genes involved in nitrogen metabolism. It catalyzes the ATP-dependent biosynthesis of glutamine from glutamate and ammonia. Feedback-inhibited GlnA also interacts with and regulates the activity of the transcriptional regulator TnrA. During nitrogen limitation, TnrA is in its DNA-binding active state and turns on the transcription of genes required for nitrogen assimilation. Under conditions of nitrogen excess, feedback-inhibited GlnA forms a stable complex with TnrA, which inhibits its DNA-binding activity. In contrast, feedback-inhibited GlnA acts as a chaperone to stabilize the DNA-binding activity of GlnR, which represses the transcription of nitrogen assimilation genes. In Staphylococcus epidermidis (strain ATCC 35984 / DSM 28319 / BCRC 17069 / CCUG 31568 / BM 3577 / RP62A), this protein is Glutamine synthetase.